The chain runs to 308 residues: D-alanine--D-alanine ligase (308 aa).

Residues 100 to 295 (KEVFVRNGLP…FDGLIGRLIE (196 aa)) form the ATP-grasp domain. 127–180 (PFAFPAFIKSNNGGSSLALHRVSCPGELARALDELFTRGGEAIIEPAVEGVEVT) provides a ligand contact to ATP. Residues Asp249, Glu262, and Asn264 each contribute to the Mg(2+) site.

Belongs to the D-alanine--D-alanine ligase family. Mg(2+) serves as cofactor. The cofactor is Mn(2+).

The protein resides in the cytoplasm. The enzyme catalyses 2 D-alanine + ATP = D-alanyl-D-alanine + ADP + phosphate + H(+). It participates in cell wall biogenesis; peptidoglycan biosynthesis. In terms of biological role, cell wall formation. The polypeptide is D-alanine--D-alanine ligase (Oleidesulfovibrio alaskensis (strain ATCC BAA-1058 / DSM 17464 / G20) (Desulfovibrio alaskensis)).